Consider the following 205-residue polypeptide: Putative 3-methyladenine DNA glycosylase (205 aa).

It belongs to the DNA glycosylase MPG family.

The protein is Putative 3-methyladenine DNA glycosylase of Bacillus cereus (strain Q1).